We begin with the raw amino-acid sequence, 54 residues long: Low temperature-induced protein lt101.2 (54 aa).

Helical transmembrane passes span 2-22 (ASAT…GVFL) and 34-54 (LLLT…VLVA).

It belongs to the UPF0057 (PMP3) family.

The protein localises to the membrane. This is Low temperature-induced protein lt101.2 (LT101.2) from Hordeum vulgare (Barley).